A 243-amino-acid chain; its full sequence is UPF0688 protein C1orf174 (243 aa).

Disordered regions lie at residues 78–100 and 132–243; these read NDSA…AEGS and LAKT…DAEM. Residues 145–157 are compositionally biased toward low complexity; it reads SAGSGAEESNSSS. A phosphoserine mark is found at S148 and S189. Acidic residues predominate over residues 233-243; the sequence is DDDDDDDDAEM.

The protein belongs to the UPF0688 family.

The protein resides in the nucleus. The chain is UPF0688 protein C1orf174 (C1orf174) from Homo sapiens (Human).